The chain runs to 950 residues: Protocadherin alpha-3 (950 aa).

The N-terminal stretch at 1 to 29 is a signal peptide; that stretch reads MLFSWREDPGAQCLLLSLLLLAASEVGSG. 6 Cadherin domains span residues 30–133, 134–242, 243–350, 351–455, 456–565, and 581–678; these read QLHY…APVF, PMSV…APAF, ERTI…VPEL, VIHS…APAF, SQSE…APAL, and VPRS…APKA. At 30-697 the chain is on the extracellular side; that stretch reads QLHYSVSEEA…GPEAALVDVN (668 aa). 2 N-linked (GlcNAc...) asparagine glycosylation sites follow: N257 and N265. N-linked (GlcNAc...) asparagine glycosylation occurs at N548. The helical transmembrane segment at 698–718 threads the bilayer; that stretch reads VYLIVAICAVSSLLVLTLLLY. Residues 719–950 are Cytoplasmic-facing; the sequence is TALRCSAPPT…GNSTTDNSDQ (232 aa). 2 PXXP repeats span residues 734–737 and 774–777; these read PGKP and PSLP. Residues 734–894 form a 6 X 4 AA repeats of P-X-X-P region; it reads PGKPTLVCSS…PDKFIIPGSP (161 aa). Disordered stretches follow at residues 777–806, 831–856, and 869–889; these read PPCPISRDREEKQDVDVDLSAKPRQPNPDW, GPGGPDQQWPTVSSATPEPEAGEVSP, and FKYGPGNPKQSGPGELPDKFI. Residues 782-797 show a composition bias toward basic and acidic residues; the sequence is SRDREEKQDVDVDLSA. 4 PXXP repeats span residues 799–802, 832–835, 873–876, and 891–894; these read PRQP, PGGP, PGNP, and PGSP. The disordered stretch occupies residues 901 to 950; sequence QEPANSQIDKSDFITFGKKEETKKKKKKKKGNKTQEKKEKGNSTTDNSDQ. The span at 909–923 shows a compositional bias: basic and acidic residues; sequence DKSDFITFGKKEETK.

It localises to the cell membrane. Functionally, potential calcium-dependent cell-adhesion protein. May be involved in the establishment and maintenance of specific neuronal connections in the brain. This Pan troglodytes (Chimpanzee) protein is Protocadherin alpha-3 (PCDHA3).